A 155-amino-acid chain; its full sequence is S-ribosylhomocysteine lyase (155 aa).

His53, His57, and Cys121 together coordinate Fe cation.

This sequence belongs to the LuxS family. As to quaternary structure, homodimer. Requires Fe cation as cofactor.

It carries out the reaction S-(5-deoxy-D-ribos-5-yl)-L-homocysteine = (S)-4,5-dihydroxypentane-2,3-dione + L-homocysteine. Functionally, involved in the synthesis of autoinducer 2 (AI-2) which is secreted by bacteria and is used to communicate both the cell density and the metabolic potential of the environment. The regulation of gene expression in response to changes in cell density is called quorum sensing. Catalyzes the transformation of S-ribosylhomocysteine (RHC) to homocysteine (HC) and 4,5-dihydroxy-2,3-pentadione (DPD). The chain is S-ribosylhomocysteine lyase from Thermus thermophilus (strain ATCC BAA-163 / DSM 7039 / HB27).